Here is a 336-residue protein sequence, read N- to C-terminus: Phosphate acyltransferase (336 aa).

This sequence belongs to the PlsX family. Homodimer. Probably interacts with PlsY.

It is found in the cytoplasm. It carries out the reaction a fatty acyl-[ACP] + phosphate = an acyl phosphate + holo-[ACP]. The protein operates within lipid metabolism; phospholipid metabolism. In terms of biological role, catalyzes the reversible formation of acyl-phosphate (acyl-PO(4)) from acyl-[acyl-carrier-protein] (acyl-ACP). This enzyme utilizes acyl-ACP as fatty acyl donor, but not acyl-CoA. The protein is Phosphate acyltransferase of Pseudomonas aeruginosa (strain UCBPP-PA14).